Reading from the N-terminus, the 123-residue chain is Ribosome-binding factor A (123 aa).

This sequence belongs to the RbfA family. In terms of assembly, monomer. Binds 30S ribosomal subunits, but not 50S ribosomal subunits or 70S ribosomes.

It is found in the cytoplasm. In terms of biological role, one of several proteins that assist in the late maturation steps of the functional core of the 30S ribosomal subunit. Associates with free 30S ribosomal subunits (but not with 30S subunits that are part of 70S ribosomes or polysomes). Required for efficient processing of 16S rRNA. May interact with the 5'-terminal helix region of 16S rRNA. In Cupriavidus metallidurans (strain ATCC 43123 / DSM 2839 / NBRC 102507 / CH34) (Ralstonia metallidurans), this protein is Ribosome-binding factor A.